Here is a 219-residue protein sequence, read N- to C-terminus: RNA-3 uncharacterized 24.7 kDa protein (219 aa).

The polypeptide is RNA-3 uncharacterized 24.7 kDa protein (Beta macrocarpa (Beet)).